The following is a 501-amino-acid chain: Cryptochrome-1 (501 aa).

In terms of domain architecture, Photolyase/cryptochrome alpha/beta spans 5-134 (KKTIVWFRRD…SVQSYNGDLC (130 aa)). Residues Tyr231 and 243 to 247 (TSLLS) each bind FAD. Arg356 contacts ATP. Asp386 and Asp388 together coordinate FAD. Residue Asp405 participates in ATP binding.

Belongs to the DNA photolyase class-1 family. As to quaternary structure, homodimer. FAD serves as cofactor. It depends on (6R)-5,10-methylene-5,6,7,8-tetrahydrofolate as a cofactor.

Its function is as follows. Mediates blue light-induced gene expression in addition to its role in blue light-dependent inhibition of stem growth. This Sinapis alba (White mustard) protein is Cryptochrome-1 (PHR1).